Reading from the N-terminus, the 663-residue chain is UvrABC system protein B (663 aa).

The 158-residue stretch at 31–188 (DNIEGGEKAQ…NDLVDIQFER (158 aa)) folds into the Helicase ATP-binding domain. 44 to 51 (GATGTGKT) contributes to the ATP binding site. The Beta-hairpin motif lies at 97-120 (YYDYYQPEAYVPSSDTYIEKDSSV). Residues 435–601 (QMDDLLGEIN…TIKKDIRDLI (167 aa)) form the Helicase C-terminal domain. In terms of domain architecture, UVR spans 627 to 662 (QEAIKKLQKQMQEAAELLDFELAAQIRDMVLELKAM).

It belongs to the UvrB family. As to quaternary structure, forms a heterotetramer with UvrA during the search for lesions. Interacts with UvrC in an incision complex.

It is found in the cytoplasm. The UvrABC repair system catalyzes the recognition and processing of DNA lesions. A damage recognition complex composed of 2 UvrA and 2 UvrB subunits scans DNA for abnormalities. Upon binding of the UvrA(2)B(2) complex to a putative damaged site, the DNA wraps around one UvrB monomer. DNA wrap is dependent on ATP binding by UvrB and probably causes local melting of the DNA helix, facilitating insertion of UvrB beta-hairpin between the DNA strands. Then UvrB probes one DNA strand for the presence of a lesion. If a lesion is found the UvrA subunits dissociate and the UvrB-DNA preincision complex is formed. This complex is subsequently bound by UvrC and the second UvrB is released. If no lesion is found, the DNA wraps around the other UvrB subunit that will check the other stand for damage. The polypeptide is UvrABC system protein B (Streptococcus mutans serotype c (strain ATCC 700610 / UA159)).